We begin with the raw amino-acid sequence, 565 residues long: Sulfite reductase [NADPH] hemoprotein beta-component (565 aa).

Positions 429, 435, 474, and 478 each coordinate [4Fe-4S] cluster. A siroheme-binding site is contributed by cysteine 478.

This sequence belongs to the nitrite and sulfite reductase 4Fe-4S domain family. As to quaternary structure, alpha(8)-beta(8). The alpha component is a flavoprotein, the beta component is a hemoprotein. Siroheme serves as cofactor. [4Fe-4S] cluster is required as a cofactor.

It catalyses the reaction hydrogen sulfide + 3 NADP(+) + 3 H2O = sulfite + 3 NADPH + 4 H(+). Its pathway is sulfur metabolism; hydrogen sulfide biosynthesis; hydrogen sulfide from sulfite (NADPH route): step 1/1. Component of the sulfite reductase complex that catalyzes the 6-electron reduction of sulfite to sulfide. This is one of several activities required for the biosynthesis of L-cysteine from sulfate. In Shewanella piezotolerans (strain WP3 / JCM 13877), this protein is Sulfite reductase [NADPH] hemoprotein beta-component.